Consider the following 329-residue polypeptide: Prostaglandin reductase 1 (329 aa).

T18 is subject to Phosphothreonine. Residue S20 is modified to Phosphoserine. NADP(+) is bound by residues 152 to 155 (GAVG), K178, Y193, N217, 239 to 245 (CGAISTY), 270 to 272 (FVV), and N321. K178 is subject to N6-(2-hydroxyisobutyryl)lysine; alternate. An N6-acetyllysine; alternate modification is found at K178.

This sequence belongs to the NADP-dependent oxidoreductase L4BD family. As to quaternary structure, monomer or homodimer. As to expression, high expression in the kidney, liver, and intestine but not in leukocytes.

Its subcellular location is the cytoplasm. The enzyme catalyses 13,14-dihydro-15-oxo-prostaglandin E1 + NADP(+) = 15-oxoprostaglandin E1 + NADPH + H(+). It catalyses the reaction 13,14-dihydro-15-oxo-prostaglandin E2 + NADP(+) = 15-oxoprostaglandin E2 + NADPH + H(+). The catalysed reaction is 13,14-dihydro-15-oxo-prostaglandin F1alpha + NADP(+) = 15-oxoprostaglandin F1alpha + NADPH + H(+). It carries out the reaction 13,14-dihydro-15-oxo-PGF2alpha + NADP(+) = 15-oxoprostaglandin F2alpha + NADPH + H(+). The enzyme catalyses leukotriene B4 + NADP(+) = 12-oxo-leukotriene B4 + NADPH + H(+). It catalyses the reaction 20-hydroxy-leukotriene B4 + NADP(+) = 12-oxo-20-hydroxy-leukotriene B4 + NADPH + H(+). The catalysed reaction is 6-trans-leukotriene B4 + NADP(+) = 12-oxo-(5S)-hydroxy-(6E,8E,10E,14Z)-eicosatetraenoate + NADPH + H(+). It carries out the reaction (5S,12S)-dihydroxy-(6E,10E,12E,14Z)-eicosatetraenoate + NADP(+) = 12-oxo-(5S)-hydroxy-(6E,8E,10E,14Z)-eicosatetraenoate + NADPH + H(+). The enzyme catalyses an n-alkanal + NADP(+) = an alk-2-enal + NADPH + H(+). It catalyses the reaction hexanal + NADP(+) = (E)-hex-2-enal + NADPH + H(+). The catalysed reaction is octanal + NADP(+) = (2E)-octenal + NADPH + H(+). It carries out the reaction decanal + NADP(+) = (2E)-decenal + NADPH + H(+). The enzyme catalyses dodecanal + NADP(+) = (2E)-dodecenal + NADPH + H(+). It catalyses the reaction 4-hydroxynonanal + NADP(+) = (E)-4-hydroxynon-2-enal + NADPH + H(+). The catalysed reaction is pentan-2-one + NADP(+) = (E)-pent-3-en-2-one + NADPH + H(+). It carries out the reaction nonan-2-one + NADP(+) = (3E)-nonen-2-one + NADPH + H(+). Its function is as follows. NAD(P)H-dependent oxidoreductase involved in metabolic inactivation of pro- and anti-inflammatory eicosanoids: prostaglandins (PG), leukotrienes (LT) and lipoxins (LX). Catalyzes with high efficiency the reduction of the 13,14 double bond of 15-oxoPGs, including 15-oxo-PGE1, 15-oxo-PGE2, 15-oxo-PGF1-alpha and 15-oxo-PGF2-alpha. Catalyzes with lower efficiency the oxidation of the hydroxyl group at C12 of LTB4 and its derivatives, converting them into biologically less active 12-oxo-LTB4 metabolites. Reduces 15-oxo-LXA4 to 13,14 dihydro-15-oxo-LXA4, enhancing neutrophil recruitment at the inflammatory site. May play a role in metabolic detoxification of alkenals and ketones. Reduces alpha,beta-unsaturated alkenals and ketones, particularly those with medium-chain length, showing highest affinity toward (2E)-decenal and (3E)-3-nonen-2-one. May inactivate 4-hydroxy-2-nonenal, a cytotoxic lipid constituent of oxidized low-density lipoprotein particles. This Homo sapiens (Human) protein is Prostaglandin reductase 1 (PTGR1).